A 564-amino-acid chain; its full sequence is Quinone-dependent D-lactate dehydrogenase (564 aa).

An FAD-binding PCMH-type domain is found at 36–207 (GTGNALAVVR…TNLQEKRYQV (172 aa)). FAD-binding positions include 70 to 74 (AANTG), 78 to 79 (GS), glycine 137, serine 144, glycine 154, and valine 256.

It belongs to the quinone-dependent D-lactate dehydrogenase family. FAD is required as a cofactor.

The protein resides in the cell inner membrane. The enzyme catalyses (R)-lactate + a quinone = a quinol + pyruvate. In terms of biological role, catalyzes the oxidation of D-lactate to pyruvate. The polypeptide is Quinone-dependent D-lactate dehydrogenase (Haemophilus influenzae (strain ATCC 51907 / DSM 11121 / KW20 / Rd)).